The following is a 63-amino-acid chain: 2-hydroxymuconate tautomerase (63 aa).

The Proton acceptor; via imino nitrogen role is filled by P2.

This sequence belongs to the 4-oxalocrotonate tautomerase family. As to quaternary structure, homohexamer.

It carries out the reaction (2Z,4E)-2-hydroxyhexa-2,4-dienedioate = (3E)-2-oxohex-3-enedioate. It functions in the pathway aromatic compound metabolism; salicylate degradation. Catalyzes the ketonization of 2-hydroxymuconate stereoselectively to yield 2-oxo-3-hexenedioate. The protein is 2-hydroxymuconate tautomerase (nahJ) of Pseudomonas fluorescens.